The primary structure comprises 417 residues: V-set and immunoglobulin domain-containing protein 8 (417 aa).

Residues 1-21 form the signal peptide; sequence MGVRGALHLLLVCLSPALLSA. Ig-like V-type domains follow at residues 22-140 and 145-256; these read VRIN…VIVT and PAVP…VKVS. Residues 22 to 262 lie on the Extracellular side of the membrane; it reads VRINGDGQEV…VKVSDSQRVG (241 aa). Cystine bridges form between Cys-44–Cys-125 and Cys-166–Cys-238. The chain crosses the membrane as a helical span at residues 263-283; it reads MIVGAVLGSLLMLACLALGIW. Residues 284-417 are Cytoplasmic-facing; that stretch reads GLICCCCGGG…QRSCKDGLLV (134 aa).

The protein resides in the membrane. This is V-set and immunoglobulin domain-containing protein 8 (Vsig8) from Mus musculus (Mouse).